The sequence spans 225 residues: Orotate phosphoribosyltransferase (225 aa).

Residues K26, 73–74, R100, K101, K104, H106, and 127–135 contribute to the 5-phospho-alpha-D-ribose 1-diphosphate site; these read YK and EDVTTAGTS. Residues T131 and R160 each contribute to the orotate site.

This sequence belongs to the purine/pyrimidine phosphoribosyltransferase family. PyrE subfamily. Homodimer. Mg(2+) serves as cofactor.

It carries out the reaction orotidine 5'-phosphate + diphosphate = orotate + 5-phospho-alpha-D-ribose 1-diphosphate. Its pathway is pyrimidine metabolism; UMP biosynthesis via de novo pathway; UMP from orotate: step 1/2. Catalyzes the transfer of a ribosyl phosphate group from 5-phosphoribose 1-diphosphate to orotate, leading to the formation of orotidine monophosphate (OMP). The sequence is that of Orotate phosphoribosyltransferase from Lachnoclostridium phytofermentans (strain ATCC 700394 / DSM 18823 / ISDg) (Clostridium phytofermentans).